Here is a 253-residue protein sequence, read N- to C-terminus: Zinc import ATP-binding protein ZnuC (253 aa).

The 222-residue stretch at 6-227 (VTLNKISVTF…FGNRGAEQLA (222 aa)) folds into the ABC transporter domain. 38–45 (GPNGAGKS) lines the ATP pocket.

Belongs to the ABC transporter superfamily. Zinc importer (TC 3.A.1.15.5) family. The complex is composed of two ATP-binding proteins (ZnuC), two transmembrane proteins (ZnuB) and a solute-binding protein (ZnuA).

It is found in the cell inner membrane. The catalysed reaction is Zn(2+)(out) + ATP(in) + H2O(in) = Zn(2+)(in) + ADP(in) + phosphate(in) + H(+)(in). Functionally, part of the ABC transporter complex ZnuABC involved in zinc import. Responsible for energy coupling to the transport system. The sequence is that of Zinc import ATP-binding protein ZnuC from Yersinia pestis bv. Antiqua (strain Antiqua).